A 155-amino-acid chain; its full sequence is Ribosome maturation factor RimP (155 aa).

Belongs to the RimP family.

It is found in the cytoplasm. Its function is as follows. Required for maturation of 30S ribosomal subunits. In Listeria innocua serovar 6a (strain ATCC BAA-680 / CLIP 11262), this protein is Ribosome maturation factor RimP.